A 270-amino-acid chain; its full sequence is 3-phenylpropionate-dihydrodiol/cinnamic acid-dihydrodiol dehydrogenase (270 aa).

Residue 10 to 34 (FITGGGSGLGLALVERFIEEGAQVA) coordinates NAD(+). S143 serves as a coordination point for substrate. Y156 (proton acceptor) is an active-site residue.

It belongs to the short-chain dehydrogenases/reductases (SDR) family.

The enzyme catalyses 3-(cis-5,6-dihydroxycyclohexa-1,3-dien-1-yl)propanoate + NAD(+) = 3-(2,3-dihydroxyphenyl)propanoate + NADH + H(+). It carries out the reaction (2E)-3-(cis-5,6-dihydroxycyclohexa-1,3-dien-1-yl)prop-2-enoate + NAD(+) = (2E)-3-(2,3-dihydroxyphenyl)prop-2-enoate + NADH + H(+). The protein operates within aromatic compound metabolism; 3-phenylpropanoate degradation. Converts 3-phenylpropionate-dihydrodiol (PP-dihydrodiol) and cinnamic acid-dihydrodiol (CI-dihydrodiol) into 3-(2,3-dihydroxylphenyl)propanoic acid (DHPP) and 2,3-dihydroxicinnamic acid (DHCI), respectively. This Escherichia coli (strain K12 / MC4100 / BW2952) protein is 3-phenylpropionate-dihydrodiol/cinnamic acid-dihydrodiol dehydrogenase.